Reading from the N-terminus, the 740-residue chain is MEKLGVEPEEEGGGDDDEEDAEAWAMELADVGAAASSQGVHDQVLPTPNASSRVIVHVDLDCFYAQVEMISNPELKDKPLGVQQKYLVVTCNYEARKLGVKKLMNVRDAKEKCPQLVLVNGEDLTRYREMSYKVTELLEEFSPVVERLGFDENFVDLTEMVEKRLQQLQSDELSAVTVSGHVYNNQSINLLDVLHIRLLVGSQIAAEMREAMYNQLGLTGCAGVASNKLLAKLVSGVFKPNQQTVLLPESCQHLIHSLNHIKEIPGIGYKTAKCLEALGINSVRDLQTFSPKILEKELGISVAQRIQKLSFGEDNSPVILSGPPQSFSEEDSFKKCSSEVEAKNKIEELLASLLNRVCQDGRKPHTVRLIIRRYSSEKHYGRESRQCPIPSHVIQKLGTGNYDVMTPMVDILMKLFRNMVNVKMPFHLTLLSVCFCNLKALNTAKKGLIDYYLMPSLSTTSRSGKHSFKMKDTHMEDFPKDKETNRDFLPSGRIESTRTRESPLDTTNFSKEKDINEFPLCSLPEGVDQEVFKQLPVDIQEEILSGKSREKFQGKGSVSCPLHASRGVLSFFSKKQMQDIPINPRDHLSSSKQVSSVSPCEPGTSGFNSSSSSYMSSQKDYSYYLDNRLKDERISQGPKEPQGFHFTNSNPAVSAFHSFPNLQSEQLFSRNHTTDSHKQTVATDSHEGLTENREPDSVDEKITFPSDIDPQVFYELPEAVQKELLAEWKRAGSDFHIGHK.

Residues 1-21 (MEKLGVEPEEEGGGDDDEEDA) are disordered. The span at 7–21 (EPEEEGGGDDDEEDA) shows a compositional bias: acidic residues. The UmuC domain occupies 55-268 (IVHVDLDCFY…NHIKEIPGIG (214 aa)). Mg(2+)-binding residues include aspartate 59 and leucine 60. Mn(2+)-binding residues include aspartate 59 and leucine 60. Residues tyrosine 64 and arginine 96 each coordinate a 2'-deoxyribonucleoside 5'-triphosphate. Residue aspartate 151 participates in Mg(2+) binding. Aspartate 151 contacts Mn(2+). Catalysis depends on glutamate 152, which acts as the Proton acceptor. DNA-binding stretches follow at residues 249–314 (ESCQ…FGED) and 325–439 (QSFS…CNLK). Positions 527-544 (VDQEVFKQLPVDIQEEIL) match the Ubiquitin-binding 1 (UBM1) motif. 2 disordered regions span residues 581–615 (PINPRDHLSSSKQVSSVSPCEPGTSGFNSSSSSYM) and 671–704 (NHTTDSHKQTVATDSHEGLTENREPDSVDEKITF). Positions 605–615 (SGFNSSSSSYM) are enriched in low complexity. Residues 672-702 (HTTDSHKQTVATDSHEGLTENREPDSVDEKI) show a composition bias toward basic and acidic residues. The Ubiquitin-binding 2 (UBM2) motif lies at 708 to 725 (IDPQVFYELPEAVQKELL).

This sequence belongs to the DNA polymerase type-Y family. In terms of assembly, interacts with POLH. Interacts with REV1. Interacts with ubiquitin. Mg(2+) serves as cofactor. Requires Mn(2+) as cofactor. In terms of processing, monoubiquitinated. Protein monoubiquitination prevents POLI binding to ubiquitin via the ubiquitin-binding motif 1 and ubiquitin-binding motif 2. Ubiquitous. Highly expressed in testis.

The protein resides in the nucleus. It carries out the reaction DNA(n) + a 2'-deoxyribonucleoside 5'-triphosphate = DNA(n+1) + diphosphate. In terms of biological role, error-prone DNA polymerase specifically involved in DNA repair. Plays an important role in translesion synthesis, where the normal high-fidelity DNA polymerases cannot proceed and DNA synthesis stalls. Favors Hoogsteen base-pairing in the active site. Inserts the correct base with high-fidelity opposite an adenosine template. Exhibits low fidelity and efficiency opposite a thymidine template, where it will preferentially insert guanosine. May play a role in hypermutation of immunoglobulin genes. Forms a Schiff base with 5'-deoxyribose phosphate at abasic sites, but may not have lyase activity. The chain is DNA polymerase iota (POLI) from Homo sapiens (Human).